A 748-amino-acid polypeptide reads, in one-letter code: Antigen peptide transporter 1 (748 aa).

Residues 1–15 (MASSRCPAPRGCRCL) are Cytoplasmic-facing. The helical transmembrane segment at 16–36 (PGASLAWLGTVLLLLADWVLL) threads the bilayer. The Lumenal portion of the chain corresponds to 37–53 (RTALPRIFSLLVPTALP). The chain crosses the membrane as a helical span at residues 54 to 76 (LLRVWAVGLSRWAVLWLGACGVL). Residues 77-92 (RATVGSKSENAGAQGW) are Cytoplasmic-facing. The chain crosses the membrane as a helical span at residues 93 to 113 (LAALKPLAAALGLALPGLALF). Over 114–133 (RELISWGAPGSADSTRLLHW) the chain is Lumenal. Residues 134-154 (GSHPTAFVVSYAAALPAAALW) traverse the membrane as a helical segment. Residues 155–186 (HKLGSLWVPGGQGGSGNPVRRLLGCLGSETRR) are Cytoplasmic-facing. A helical membrane pass occupies residues 187 to 207 (LSLFLVLVVLSSLGEMAIPFF). An ABC transmembrane type-1 domain is found at 187–470 (LSLFLVLVVL…LLSIYPRVQK (284 aa)). The Lumenal portion of the chain corresponds to 208-227 (TGRLTDWILQDGSADTFTRN). Residues 228–248 (LTLMSILTIASAVLEFVGDGI) traverse the membrane as a helical segment. Over 249 to 298 (YNNTMGHVHSHLQGEVFGAVLRQETEFFQQNQTGNIMSRVTEDTSTLSDS) the chain is Cytoplasmic. A helical membrane pass occupies residues 299-319 (LSENLSLFLWYLVRGLCLLGI). Over 320-328 (MLWGSVSLT) the chain is Lumenal. The helical transmembrane segment at 329 to 349 (MVTLITLPLLFLLPKKVGKWY) threads the bilayer. The Cytoplasmic segment spans residues 350-418 (QLLEVQVRES…AVNSWTTSIS (69 aa)). A part of the peptide-binding site region spans residues 375 to 420 (PTVRSFANEEGEAQKFREKLQEIKTLNQKEAVAYAVNSWTTSISGM). The helical transmembrane segment at 419-439 (GMLLKVGILYIGGQLVTSGAV) threads the bilayer. At 440–443 (SSGN) the chain is on the lumenal side. Residues 444–464 (LVTFVLYQMQFTQAVEVLLSI) form a helical membrane-spanning segment. The part of the peptide-binding site stretch occupies residues 453 to 487 (QFTQAVEVLLSIYPRVQKAVGSSEKIFEYLDRTPR). Residues 465–748 (YPRVQKAVGS…MVQAPADAPE (284 aa)) lie on the Cytoplasmic side of the membrane. The 240-residue stretch at 503 to 742 (VQFQDVSFAY…KGCYWAMVQA (240 aa)) folds into the ABC transporter domain. Residues 538-546 (GPNGSGKST), 641-647 (SQLSGGQ), and Gln-701 contribute to the ATP site. Residue Ser-545 participates in Mg(2+) binding.

The protein belongs to the ABC transporter superfamily. ABCB family. MHC peptide exporter (TC 3.A.1.209) subfamily. As to quaternary structure, heterodimer of TAP1 and TAP2 (TAP1-TAP2). A component of the peptide loading complex (PLC), interacts via TAPBP with MHCI heterodimer; this interaction mediates peptide-MHCI assembly. Recruits TAPBP in a 1:1 stoichiometry. Interacts with classical MHCI such as HLA-A*02-B2M; this interaction is obligatory for the loading of peptide epitopes. Interacts with non-classical MHCI molecules including HLA-E-B2M and HLA-F-B2M as well as PLC component CALR before the peptide loading. Interacts with PSMB5 and PSMB8. In terms of assembly, (Microbial infection) Interacts with Epstein-Barr virus BNLF2a. (Microbial infection) Interacts with herpes simplex virus US12/ICP47. As to quaternary structure, (Microbial infection) Interacts with adenovirus E3-19K glycoprotein, which binds TAP1-TAP2 and acts as a TAPBP inhibitor, preventing TAP1-TAP2 association with MHCI. Mg(2+) serves as cofactor. In terms of tissue distribution, highly expressed in professional APCs monocytes and dendritic cells as well as in lymphocyte subsets T cells, B cells and NK cells.

It localises to the endoplasmic reticulum membrane. It catalyses the reaction a peptide antigen(in) + ATP + H2O = a peptide antigen(out) + ADP + phosphate + H(+). Inhibited at high ER lumenal peptide concentrations. With respect to regulation, (Microbial infection) Inhibited by herpes simplex virus US12/ICP47 protein, which blocks the peptide-binding site of TAP1-TAP2. Its activity is regulated as follows. (Microbial infection) Inhibited by human cytomegalovirus US6 glycoprotein, which binds to the lumenal side of TAP1-TAP2 complex and inhibits peptide translocation by specifically blocking ATP-binding and preventing TAP1-TAP2 conformational rearrangement induced by peptide binding. Functionally, ABC transporter associated with antigen processing. In complex with TAP2 mediates unidirectional translocation of peptide antigens from cytosol to endoplasmic reticulum (ER) for loading onto MHC class I (MHCI) molecules. Uses the chemical energy of ATP to export peptides against the concentration gradient. During the transport cycle alternates between 'inward-facing' state with peptide binding site facing the cytosol to 'outward-facing' state with peptide binding site facing the ER lumen. Peptide antigen binding to ATP-loaded TAP1-TAP2 induces a switch to hydrolysis-competent 'outward-facing' conformation ready for peptide loading onto nascent MHCI molecules. Subsequently ATP hydrolysis resets the transporter to the 'inward facing' state for a new cycle. Typically transports intracellular peptide antigens of 8 to 13 amino acids that arise from cytosolic proteolysis via IFNG-induced immunoproteasome. Binds peptides with free N- and C-termini, the first three and the C-terminal residues being critical. Preferentially selects peptides having a highly hydrophobic residue at position 3 and hydrophobic or charged residues at the C-terminal anchor. Proline at position 2 has the most destabilizing effect. As a component of the peptide loading complex (PLC), acts as a molecular scaffold essential for peptide-MHCI assembly and antigen presentation. This chain is Antigen peptide transporter 1, found in Homo sapiens (Human).